A 257-amino-acid chain; its full sequence is Thiazole synthase (257 aa).

The active-site Schiff-base intermediate with DXP is lysine 99. 1-deoxy-D-xylulose 5-phosphate-binding positions include glycine 160, 186 to 187 (AG), and 208 to 209 (NT).

The protein belongs to the ThiG family. Homotetramer. Forms heterodimers with either ThiH or ThiS.

It localises to the cytoplasm. It carries out the reaction [ThiS sulfur-carrier protein]-C-terminal-Gly-aminoethanethioate + 2-iminoacetate + 1-deoxy-D-xylulose 5-phosphate = [ThiS sulfur-carrier protein]-C-terminal Gly-Gly + 2-[(2R,5Z)-2-carboxy-4-methylthiazol-5(2H)-ylidene]ethyl phosphate + 2 H2O + H(+). It participates in cofactor biosynthesis; thiamine diphosphate biosynthesis. Functionally, catalyzes the rearrangement of 1-deoxy-D-xylulose 5-phosphate (DXP) to produce the thiazole phosphate moiety of thiamine. Sulfur is provided by the thiocarboxylate moiety of the carrier protein ThiS. In vitro, sulfur can be provided by H(2)S. The protein is Thiazole synthase of Thermodesulfovibrio yellowstonii (strain ATCC 51303 / DSM 11347 / YP87).